Here is a 734-residue protein sequence, read N- to C-terminus: Photosystem I P700 chlorophyll a apoprotein A2 (734 aa).

8 consecutive transmembrane segments (helical) span residues 46 to 69 (IFAS…FHVA), 135 to 158 (LYTG…LHLQ), 175 to 199 (LNHH…HVAI), 273 to 291 (MAHH…GHMY), 330 to 353 (LHMQ…QHMY), 369 to 395 (ASLY…IFFV), 417 to 439 (AIIS…LYVH), and 517 to 535 (FLVH…LILV). Positions 559 and 568 each coordinate [4Fe-4S] cluster. 2 helical membrane passes run 575 to 596 (AFYL…YWHW) and 643 to 665 (LSVW…MFLI). 3 residues coordinate chlorophyll a: His654, Met662, and Tyr670. Position 671 (Trp671) interacts with phylloquinone. The chain crosses the membrane as a helical span at residues 707-727 (LVGLAHFSVGYVLTYAAFVLA).

The protein belongs to the PsaA/PsaB family. In terms of assembly, the PsaA/B heterodimer binds the P700 chlorophyll special pair and subsequent electron acceptors. PSI consists of a core antenna complex that captures photons, and an electron transfer chain that converts photonic excitation into a charge separation. The eukaryotic PSI reaction center is composed of at least 11 subunits. The cofactor is P700 is a chlorophyll a/chlorophyll a' dimer, A0 is one or more chlorophyll a, A1 is one or both phylloquinones and FX is a shared 4Fe-4S iron-sulfur center..

It is found in the plastid. The protein localises to the chloroplast thylakoid membrane. It carries out the reaction reduced [plastocyanin] + hnu + oxidized [2Fe-2S]-[ferredoxin] = oxidized [plastocyanin] + reduced [2Fe-2S]-[ferredoxin]. Its function is as follows. PsaA and PsaB bind P700, the primary electron donor of photosystem I (PSI), as well as the electron acceptors A0, A1 and FX. PSI is a plastocyanin/cytochrome c6-ferredoxin oxidoreductase, converting photonic excitation into a charge separation, which transfers an electron from the donor P700 chlorophyll pair to the spectroscopically characterized acceptors A0, A1, FX, FA and FB in turn. Oxidized P700 is reduced on the lumenal side of the thylakoid membrane by plastocyanin or cytochrome c6. The polypeptide is Photosystem I P700 chlorophyll a apoprotein A2 (Porphyra purpurea (Red seaweed)).